A 113-amino-acid polypeptide reads, in one-letter code: Ig heavy chain V region 36-60 (113 aa).

In Mus musculus (Mouse), this protein is Ig heavy chain V region 36-60.